The primary structure comprises 425 residues: Aspartic protease 2 (425 aa).

The signal sequence occupies residues 1–16 (MRSILVLVALIGCIAA). The 350-residue stretch at 72–421 (YLGEITIGTP…DIEKKRIGFA (350 aa)) folds into the Peptidase A1 domain. The active site involves Asp-90. A disulfide bridge connects residues Cys-103 and Cys-145. Residues Asn-163, Asn-197, and Asn-304 are each glycosylated (N-linked (GlcNAc...) asparagine). Residue Asp-316 is part of the active site. A disulfide bridge links Cys-351 with Cys-382. Asn-354 and Asn-365 each carry an N-linked (GlcNAc...) asparagine glycan.

It belongs to the peptidase A1 family. Post-translationally, cleaved into a mature form. Expressed in intestine, amphidal glands and excretory gland (at protein level).

The protein localises to the secreted. With respect to regulation, inhibited by pepstatin A. Functionally, aspartic protease which cleaves several human serum proteins including hemoglobin, fibrinogen and albumin. Appears to cleave preferentially between P1 (Ala, Leu, Val, Phe and Gly) and P1' (Ala and Leu) residues. The protein is Aspartic protease 2 of Necator americanus (Human hookworm).